Reading from the N-terminus, the 469-residue chain is Glutamate--tRNA ligase 2 (469 aa).

The 'HIGH' region signature appears at 10–20 (PSPTGYLHIGG). Cys-99, Cys-101, Cys-126, and Asp-128 together coordinate Zn(2+). The 'KMSKS' region signature appears at 237-241 (RLSKR). Lys-240 is an ATP binding site.

This sequence belongs to the class-I aminoacyl-tRNA synthetase family. Glutamate--tRNA ligase type 1 subfamily. Monomer. It depends on Zn(2+) as a cofactor.

Its subcellular location is the cytoplasm. The catalysed reaction is tRNA(Glu) + L-glutamate + ATP = L-glutamyl-tRNA(Glu) + AMP + diphosphate. Catalyzes the attachment of glutamate to tRNA(Glu) in a two-step reaction: glutamate is first activated by ATP to form Glu-AMP and then transferred to the acceptor end of tRNA(Glu). The polypeptide is Glutamate--tRNA ligase 2 (Coxiella burnetii (strain CbuG_Q212) (Coxiella burnetii (strain Q212))).